Here is a 630-residue protein sequence, read N- to C-terminus: Beta-phellandrene synthase, chloroplastic (630 aa).

Residues 1–48 (MALVSSAPKSCLHKSLIRSTHHELKPLRRTIPTLGMCRRGKSFTPSVS) constitute a chloroplast transit peptide. The Mg(2+) site is built by Asp381, Asp385, and Asp533. Residues 381–385 (DDIYD) carry the DDXXD motif motif.

It belongs to the terpene synthase family. Tpsd subfamily. Mg(2+) is required as a cofactor. The cofactor is Mn(2+). Requires K(+) as cofactor.

The protein resides in the plastid. The protein localises to the chloroplast. It carries out the reaction (2E)-geranyl diphosphate = (-)-beta-phellandrene + diphosphate. It participates in terpene metabolism; oleoresin biosynthesis. Functionally, converts geranyl diphosphate to four products with (-)-(4S)-beta-phellandrene (52%) as the major olefin, and lesser amounts of (-)-(1S,5S)-beta-pinene (34%), (-)-1S,5S-alpha-pinene (8.5%), and (-)-(4S)-limonene (6%). Involved in defensive oleoresin formation in conifers in response to insect attack or other injury. Involved in monoterpene (C10) olefins biosynthesis. This Abies grandis (Grand fir) protein is Beta-phellandrene synthase, chloroplastic (ag8).